The following is a 210-amino-acid chain: Glutathione S-transferase P 2 (210 aa).

The region spanning 2–81 is the GST N-terminal domain; it reads PPYTIVYFPS…HLGRSLGLYG (80 aa). Residues tyrosine 8, arginine 14, tryptophan 39, lysine 45, 52–53, and 65–66 contribute to the glutathione site; these read QL and QS. The GST C-terminal domain maps to 83 to 204; the sequence is NQREAAQVDM…SSPEHVNRPI (122 aa).

The protein belongs to the GST superfamily. Pi family. Homodimer. Selectively expressed in gall bladder, colon, heart, and skeletal muscle.

The enzyme catalyses RX + glutathione = an S-substituted glutathione + a halide anion + H(+). Conjugation of reduced glutathione to a wide number of exogenous and endogenous hydrophobic electrophiles. Cannot metabolize 1-chloro-2,4-dinitrobenzene. The sequence is that of Glutathione S-transferase P 2 (Gstp2) from Mus musculus (Mouse).